The primary structure comprises 213 residues: Uridine kinase (213 aa).

14–21 is an ATP binding site; that stretch reads GASASGKS.

This sequence belongs to the uridine kinase family.

It localises to the cytoplasm. It catalyses the reaction uridine + ATP = UMP + ADP + H(+). The enzyme catalyses cytidine + ATP = CMP + ADP + H(+). It functions in the pathway pyrimidine metabolism; CTP biosynthesis via salvage pathway; CTP from cytidine: step 1/3. It participates in pyrimidine metabolism; UMP biosynthesis via salvage pathway; UMP from uridine: step 1/1. The sequence is that of Uridine kinase from Vibrio campbellii (strain ATCC BAA-1116).